A 308-amino-acid chain; its full sequence is Vacuolar lysine transporter YPQ1 (308 aa).

Residues Met-1–Thr-12 lie on the Vacuolar side of the membrane. Residue Asn-9 is glycosylated (N-linked (GlcNAc...) asparagine). In terms of domain architecture, PQ-loop 1 spans Arg-10–Leu-76. A helical transmembrane segment spans residues Leu-13–Ile-33. The Cytoplasmic segment spans residues Tyr-34–Gly-44. Residues Leu-45–Val-65 traverse the membrane as a helical segment. Topologically, residues Met-66–His-68 are vacuolar. The chain crosses the membrane as a helical span at residues Leu-69 to Gly-89. The Cytoplasmic segment spans residues Gln-90 to Asp-167. The helical transmembrane segment at Ile-168–Val-188 threads the bilayer. Asn-189 carries an N-linked (GlcNAc...) asparagine glycan. The Vacuolar portion of the chain corresponds to Asn-189–Glu-205. A helical membrane pass occupies residues Leu-206–Ser-226. Residues Met-211–Met-274 form the PQ-loop 2 domain. At Arg-227–Ser-244 the chain is on the cytoplasmic side. The helical transmembrane segment at Phe-245–Ile-265 threads the bilayer. The Vacuolar segment spans residues Ser-266–Ser-277. Asn-275 carries an N-linked (GlcNAc...) asparagine glycan. The chain crosses the membrane as a helical span at residues Trp-278 to Ile-298. At Tyr-299 to Asn-308 the chain is on the cytoplasmic side.

The protein belongs to the laat-1 family.

The protein resides in the vacuole membrane. In terms of biological role, amino acid transporter that moves lysine into the vacuole. May also contribute to low affinity arginine import into the vacuole. Has also been suggested to mediate export of cationic amino acids from the vacuole. May function as an amino acid/proton antiporter. This Saccharomyces cerevisiae (strain ATCC 204508 / S288c) (Baker's yeast) protein is Vacuolar lysine transporter YPQ1 (YPQ1).